A 280-amino-acid chain; its full sequence is Probable endonuclease 4 (280 aa).

9 residues coordinate Zn(2+): His69, His109, Glu145, Asp179, His182, His216, Asp229, His231, and Glu261.

Belongs to the AP endonuclease 2 family. Zn(2+) is required as a cofactor.

It catalyses the reaction Endonucleolytic cleavage to 5'-phosphooligonucleotide end-products.. In terms of biological role, endonuclease IV plays a role in DNA repair. It cleaves phosphodiester bonds at apurinic or apyrimidinic (AP) sites, generating a 3'-hydroxyl group and a 5'-terminal sugar phosphate. This is Probable endonuclease 4 from Actinobacillus pleuropneumoniae serotype 5b (strain L20).